Here is a 1649-residue protein sequence, read N- to C-terminus: DNA-directed RNA polymerase subunit beta' (1649 aa).

Cys62, Cys64, Cys77, and Cys80 together coordinate Zn(2+). Positions 746, 748, and 750 each coordinate Mg(2+). 4 residues coordinate Zn(2+): Cys1077, Cys1268, Cys1275, and Cys1278.

It belongs to the RNA polymerase beta' chain family. The RNAP catalytic core consists of 2 alpha, 1 beta, 1 beta' and 1 omega subunit. When a sigma factor is associated with the core the holoenzyme is formed, which can initiate transcription. It depends on Mg(2+) as a cofactor. Requires Zn(2+) as cofactor.

It catalyses the reaction RNA(n) + a ribonucleoside 5'-triphosphate = RNA(n+1) + diphosphate. In terms of biological role, DNA-dependent RNA polymerase catalyzes the transcription of DNA into RNA using the four ribonucleoside triphosphates as substrates. This chain is DNA-directed RNA polymerase subunit beta', found in Thermosipho africanus (strain TCF52B).